A 124-amino-acid polypeptide reads, in one-letter code: Small ribosomal subunit protein uS12 (124 aa).

Position 90 is a 3-methylthioaspartic acid (Asp-90).

The protein belongs to the universal ribosomal protein uS12 family. Part of the 30S ribosomal subunit. Contacts proteins S8 and S17. May interact with IF1 in the 30S initiation complex.

With S4 and S5 plays an important role in translational accuracy. Its function is as follows. Interacts with and stabilizes bases of the 16S rRNA that are involved in tRNA selection in the A site and with the mRNA backbone. Located at the interface of the 30S and 50S subunits, it traverses the body of the 30S subunit contacting proteins on the other side and probably holding the rRNA structure together. The combined cluster of proteins S8, S12 and S17 appears to hold together the shoulder and platform of the 30S subunit. The chain is Small ribosomal subunit protein uS12 from Wolbachia sp. subsp. Drosophila simulans (strain wRi).